The primary structure comprises 490 residues: UDP-N-acetylmuramate--L-alanine ligase (490 aa).

130 to 136 (GTHGKTT) contacts ATP.

This sequence belongs to the MurCDEF family.

The protein localises to the cytoplasm. The catalysed reaction is UDP-N-acetyl-alpha-D-muramate + L-alanine + ATP = UDP-N-acetyl-alpha-D-muramoyl-L-alanine + ADP + phosphate + H(+). It participates in cell wall biogenesis; peptidoglycan biosynthesis. In terms of biological role, cell wall formation. In Idiomarina loihiensis (strain ATCC BAA-735 / DSM 15497 / L2-TR), this protein is UDP-N-acetylmuramate--L-alanine ligase.